The following is a 203-amino-acid chain: MRLALFGGSFDPPHNAHLALCLCARELLDIDKLIISVSNNPLKENRSASNAHRLAMAELLVSEINATGRIAEVSRWELERSGPSYTIDLLTRIGQLYPEEPVTLLIGEDNFRGFRQWKSWQEILERCYVVVFRRPLEHAAFDDAYAHLPGIPDRHQVRFIDFDFQLSSTAIRYAIATGEPYAHLVPPSIADYIASRHLYSERS.

This sequence belongs to the NadD family.

The catalysed reaction is nicotinate beta-D-ribonucleotide + ATP + H(+) = deamido-NAD(+) + diphosphate. It functions in the pathway cofactor biosynthesis; NAD(+) biosynthesis; deamido-NAD(+) from nicotinate D-ribonucleotide: step 1/1. Catalyzes the reversible adenylation of nicotinate mononucleotide (NaMN) to nicotinic acid adenine dinucleotide (NaAD). The chain is Probable nicotinate-nucleotide adenylyltransferase from Prosthecochloris aestuarii (strain DSM 271 / SK 413).